The sequence spans 491 residues: Protein phosphatase ppm-1.G (491 aa).

In terms of domain architecture, PPM-type phosphatase spans 23 to 486 (SYACTTMQGW…DNMTVICTTF (464 aa)). Mn(2+) contacts are provided by Asp-57 and Gly-58. Over residues 112–125 (KDIGDEGKPKKAGG) the composition is skewed to basic and acidic residues. Disordered stretches follow at residues 112 to 136 (KDIGDEGKPKKAGGEADSEDEADRI) and 170 to 294 (GDVS…EEMV). 2 stretches are compositionally biased toward acidic residues: residues 173–192 (SDDSEDEDEDEEEAEEQDDT) and 260–294 (ATEEEDEDDSDKEFVADEEEDDEDAEDEQSDEEMV). Residues Asp-428 and Asp-477 each coordinate Mn(2+).

The protein belongs to the PP2C family. Requires Mg(2+) as cofactor. It depends on Mn(2+) as a cofactor.

The catalysed reaction is O-phospho-L-seryl-[protein] + H2O = L-seryl-[protein] + phosphate. It carries out the reaction O-phospho-L-threonyl-[protein] + H2O = L-threonyl-[protein] + phosphate. The protein is Protein phosphatase ppm-1.G of Caenorhabditis elegans.